The chain runs to 545 residues: Chaperonin GroEL (545 aa).

ATP-binding positions include 30–33 (TLGP), K51, 87–91 (DGTTT), G415, 479–481 (NAA), and D495. The disordered stretch occupies residues 526–545 (KEDKPDLGGAGGMGGMGGMM). The span at 533–545 (GGAGGMGGMGGMM) shows a compositional bias: gly residues.

This sequence belongs to the chaperonin (HSP60) family. In terms of assembly, forms a cylinder of 14 subunits composed of two heptameric rings stacked back-to-back. Interacts with the co-chaperonin GroES.

It localises to the cytoplasm. The enzyme catalyses ATP + H2O + a folded polypeptide = ADP + phosphate + an unfolded polypeptide.. Together with its co-chaperonin GroES, plays an essential role in assisting protein folding. The GroEL-GroES system forms a nano-cage that allows encapsulation of the non-native substrate proteins and provides a physical environment optimized to promote and accelerate protein folding. The sequence is that of Chaperonin GroEL from Sodalis glossinidius.